The primary structure comprises 359 residues: Cytochrome c oxidase subunit 2 (359 aa).

Residues 1–28 form the signal peptide; it reads MEQQNKRGLKRKALLGGVLGSGGLAMAG. Cys-29 is lipidated: N-palmitoyl cysteine. Cys-29 carries S-diacylglycerol cysteine lipidation. The next 2 membrane-spanning stretches (helical) occupy residues 64–84 and 107–127; these read VWVAAWIIGIIMWGLMLTAIF and VPLELVLTIVPIIIVMVLFFF. The Cu cation site is built by His-244, Cys-285, Glu-287, Cys-289, His-293, and Met-296. Residues 338–359 form a disordered region; sequence STAPFVSDRTGTRDGENFQTPA.

This sequence belongs to the cytochrome c oxidase subunit 2 family. In terms of assembly, associates with subunits I, III and IV to form cytochrome c oxidase. Binuclear copper center (CuA) is required as a cofactor.

It is found in the cell membrane. It carries out the reaction 4 Fe(II)-[cytochrome c] + O2 + 8 H(+)(in) = 4 Fe(III)-[cytochrome c] + 2 H2O + 4 H(+)(out). Subunits I and II form the functional core of the enzyme complex. Electrons originating in cytochrome c are transferred via heme a and Cu(A) to the binuclear center formed by heme a3 and Cu(B). The chain is Cytochrome c oxidase subunit 2 (ctaC) from Corynebacterium efficiens (strain DSM 44549 / YS-314 / AJ 12310 / JCM 11189 / NBRC 100395).